The sequence spans 346 residues: Magnesium-protoporphyrin IX monomethyl ester [oxidative] cyclase (346 aa).

It belongs to the AcsF family. Fe cation is required as a cofactor.

It catalyses the reaction Mg-protoporphyrin IX 13-monomethyl ester + 3 NADPH + 3 O2 + 2 H(+) = 3,8-divinyl protochlorophyllide a + 3 NADP(+) + 5 H2O. It functions in the pathway porphyrin-containing compound metabolism; chlorophyll biosynthesis (light-independent). Functionally, catalyzes the formation of the isocyclic ring in chlorophyll biosynthesis. Mediates the cyclase reaction, which results in the formation of divinylprotochlorophyllide (Pchlide) characteristic of all chlorophylls from magnesium-protoporphyrin IX 13-monomethyl ester (MgPMME). This Gloeobacter violaceus (strain ATCC 29082 / PCC 7421) protein is Magnesium-protoporphyrin IX monomethyl ester [oxidative] cyclase.